The primary structure comprises 125 residues: Large ribosomal subunit protein bL12 (125 aa).

This sequence belongs to the bacterial ribosomal protein bL12 family. In terms of assembly, homodimer. Part of the ribosomal stalk of the 50S ribosomal subunit. Forms a multimeric L10(L12)X complex, where L10 forms an elongated spine to which 2 to 4 L12 dimers bind in a sequential fashion. Binds GTP-bound translation factors.

Its function is as follows. Forms part of the ribosomal stalk which helps the ribosome interact with GTP-bound translation factors. Is thus essential for accurate translation. The protein is Large ribosomal subunit protein bL12 of Hyphomonas neptunium (strain ATCC 15444).